Here is a 213-residue protein sequence, read N- to C-terminus: RxLR effector protein PexRD1 (213 aa).

Residues 1-19 (MRACNTLLPTAIVLTSCDA) form the signal peptide. The RxLR-dEER motif lies at 50–77 (RQLRGFYATENTDPVNNQDTAHEDGEER).

This sequence belongs to the RxLR effector family.

The protein localises to the secreted. The protein resides in the host nucleus. In terms of biological role, effector that enhances P.infestans colonization of Nicotiana benthamiana leaves. The chain is RxLR effector protein PexRD1 from Phytophthora infestans (strain T30-4) (Potato late blight agent).